The primary structure comprises 525 residues: ATP synthase subunit beta, mitochondrial (525 aa).

The N-terminal 44 residues, 1 to 44 (MLKKQALSGIRRFSLATKQSFVKTSYKLPRKSWLNTAKFNTIRY), are a transit peptide targeting the mitochondrion. An ATP-binding site is contributed by 203–210 (GGAGVGKT).

The protein belongs to the ATPase alpha/beta chains family. As to quaternary structure, F-type ATPases have 2 components, CF(1) - the catalytic core - and CF(0) - the membrane proton channel. CF(1) has five subunits: alpha(3), beta(3), gamma(1), delta(1), epsilon(1). CF(0) has three main subunits: a, b and c.

It is found in the mitochondrion. Its subcellular location is the mitochondrion inner membrane. It carries out the reaction ATP + H2O + 4 H(+)(in) = ADP + phosphate + 5 H(+)(out). Mitochondrial membrane ATP synthase (F(1)F(0) ATP synthase or Complex V) produces ATP from ADP in the presence of a proton gradient across the membrane which is generated by electron transport complexes of the respiratory chain. F-type ATPases consist of two structural domains, F(1) - containing the extramembraneous catalytic core, and F(0) - containing the membrane proton channel, linked together by a central stalk and a peripheral stalk. During catalysis, ATP synthesis in the catalytic domain of F(1) is coupled via a rotary mechanism of the central stalk subunits to proton translocation. Subunits alpha and beta form the catalytic core in F(1). Rotation of the central stalk against the surrounding alpha(3)beta(3) subunits leads to hydrolysis of ATP in three separate catalytic sites on the beta subunits. The sequence is that of ATP synthase subunit beta, mitochondrial (atp2) from Schizosaccharomyces pombe (strain 972 / ATCC 24843) (Fission yeast).